The following is a 305-amino-acid chain: GMP synthase [glutamine-hydrolyzing] subunit B (305 aa).

The 184-residue stretch at 2 to 185 (VETEEFIAEA…LGLEEVISER (184 aa)) folds into the GMPS ATP-PPase domain. Residue 29–35 (SGGVDSS) coordinates ATP.

Heterodimer composed of a glutamine amidotransferase subunit (A) and a GMP-binding subunit (B).

It carries out the reaction XMP + L-glutamine + ATP + H2O = GMP + L-glutamate + AMP + diphosphate + 2 H(+). The protein operates within purine metabolism; GMP biosynthesis; GMP from XMP (L-Gln route): step 1/1. Catalyzes the synthesis of GMP from XMP. The chain is GMP synthase [glutamine-hydrolyzing] subunit B from Halorubrum lacusprofundi (strain ATCC 49239 / DSM 5036 / JCM 8891 / ACAM 34).